Here is a 446-residue protein sequence, read N- to C-terminus: tRNA-2-methylthio-N(6)-dimethylallyladenosine synthase (446 aa).

The MTTase N-terminal domain maps to 3–120 (KKIYIKTFGC…LPEMLKQRRS (118 aa)). [4Fe-4S] cluster-binding residues include Cys12, Cys49, Cys83, Cys157, Cys161, and Cys164. Residues 143–375 (KVEGATAFVS…QAVIDQNTRR (233 aa)) enclose the Radical SAM core domain. The TRAM domain occupies 378–444 (DEMVGSVQRI…AYTLRGEIVV (67 aa)).

The protein belongs to the methylthiotransferase family. MiaB subfamily. As to quaternary structure, monomer. Requires [4Fe-4S] cluster as cofactor.

It localises to the cytoplasm. The catalysed reaction is N(6)-dimethylallyladenosine(37) in tRNA + (sulfur carrier)-SH + AH2 + 2 S-adenosyl-L-methionine = 2-methylsulfanyl-N(6)-dimethylallyladenosine(37) in tRNA + (sulfur carrier)-H + 5'-deoxyadenosine + L-methionine + A + S-adenosyl-L-homocysteine + 2 H(+). Functionally, catalyzes the methylthiolation of N6-(dimethylallyl)adenosine (i(6)A), leading to the formation of 2-methylthio-N6-(dimethylallyl)adenosine (ms(2)i(6)A) at position 37 in tRNAs that read codons beginning with uridine. In Herminiimonas arsenicoxydans, this protein is tRNA-2-methylthio-N(6)-dimethylallyladenosine synthase.